The primary structure comprises 217 residues: Adenylate kinase (217 aa).

10-15 (GAGKGT) serves as a coordination point for ATP. The interval 30-59 (STGDMLRAAVKAGTPLGVEAKKVMDAGGLV) is NMP. Residues Thr-31, Arg-36, 57-59 (GLV), 85-88 (GFPR), and Gln-92 contribute to the AMP site. The segment at 122 to 159 (GRRAHLASGRTYHVKYNPPKVAGKDDLTGEDLVQRDDD) is LID. Residues Arg-123 and 132–133 (TY) contribute to the ATP site. AMP contacts are provided by Arg-156 and Arg-167. Gly-203 serves as a coordination point for ATP.

This sequence belongs to the adenylate kinase family. In terms of assembly, monomer.

The protein localises to the cytoplasm. It catalyses the reaction AMP + ATP = 2 ADP. It functions in the pathway purine metabolism; AMP biosynthesis via salvage pathway; AMP from ADP: step 1/1. Its function is as follows. Catalyzes the reversible transfer of the terminal phosphate group between ATP and AMP. Plays an important role in cellular energy homeostasis and in adenine nucleotide metabolism. This is Adenylate kinase from Aromatoleum aromaticum (strain DSM 19018 / LMG 30748 / EbN1) (Azoarcus sp. (strain EbN1)).